A 281-amino-acid polypeptide reads, in one-letter code: Probable splicing factor, arginine/serine-rich 2 (281 aa).

The RRM 1 domain maps to 2–72; it reads VRVYIGRLPN…ERVILEFPRR (71 aa). Basic and acidic residues-rich tracts occupy residues 78–97 and 168–190; these read EERS…KGGE and KLQG…DRSR. 2 disordered regions span residues 78-100 and 168-281; these read EERS…ERQF and KLQG…SASP. The RRM 2 domain maps to 112-186; the sequence is FRLVIDNLST…RKLKCTDETR (75 aa). Residues 191–215 are compositionally biased toward basic residues; sequence SRSPRRRSRSRSPTRSRSPPARRRS. Over residues 216 to 225 the composition is skewed to basic and acidic residues; it reads PGSDRSDRKS. Positions 245–254 are enriched in basic residues; that stretch reads RSRSGGRRSR.

Belongs to the splicing factor SR family. Extensively phosphorylated on serine residues in the RS domain.

The protein localises to the nucleus. Plays a functionally redundant role in spermatogenesis and growth rate control. Required for the development of somatic gonad structures and for progression from larval stage to adulthood. The protein is Probable splicing factor, arginine/serine-rich 2 (rsp-2) of Caenorhabditis elegans.